The sequence spans 193 residues: Xanthine phosphoribosyltransferase (193 aa).

Positions 20 and 27 each coordinate xanthine. 128-132 (ANGQA) contributes to the 5-phospho-alpha-D-ribose 1-diphosphate binding site. K156 is a binding site for xanthine.

It belongs to the purine/pyrimidine phosphoribosyltransferase family. Xpt subfamily. As to quaternary structure, homodimer.

It localises to the cytoplasm. The catalysed reaction is XMP + diphosphate = xanthine + 5-phospho-alpha-D-ribose 1-diphosphate. It participates in purine metabolism; XMP biosynthesis via salvage pathway; XMP from xanthine: step 1/1. Functionally, converts the preformed base xanthine, a product of nucleic acid breakdown, to xanthosine 5'-monophosphate (XMP), so it can be reused for RNA or DNA synthesis. This Streptococcus pneumoniae (strain CGSP14) protein is Xanthine phosphoribosyltransferase.